The following is a 366-amino-acid chain: S-adenosylmethionine synthase 1 (366 aa).

A K(+)-binding site is contributed by glutamate 18. The L-methionine site is built by glutamate 31 and glutamine 74. ATP contacts are provided by residues 142–144 (DGN), 210–213 (SGRF), aspartate 221, 227–228 (RK), alanine 244, lysine 248, and lysine 252. Aspartate 221 is a binding site for L-methionine. Position 252 (lysine 252) interacts with L-methionine.

It belongs to the AdoMet synthase family. Homotetramer. Mn(2+) serves as cofactor. Mg(2+) is required as a cofactor. The cofactor is Co(2+). Requires K(+) as cofactor.

It localises to the cytoplasm. It carries out the reaction L-methionine + ATP + H2O = S-adenosyl-L-methionine + phosphate + diphosphate. It functions in the pathway amino-acid biosynthesis; S-adenosyl-L-methionine biosynthesis; S-adenosyl-L-methionine from L-methionine: step 1/1. Its function is as follows. Catalyzes the formation of S-adenosylmethionine from methionine and ATP. The reaction comprises two steps that are both catalyzed by the same enzyme: formation of S-adenosylmethionine (AdoMet) and triphosphate, and subsequent hydrolysis of the triphosphate. The sequence is that of S-adenosylmethionine synthase 1 (SAMS1) from Pisum sativum (Garden pea).